The chain runs to 609 residues: mRNA cap guanine-N(7) methyltransferase (609 aa).

Residues 1-10 (MASKEEERTG) show a composition bias toward basic and acidic residues. Residues 1–252 (MASKEEERTG…EEDAMRNSQS (252 aa)) are disordered. Composition is skewed to low complexity over residues 28–47 (QPVV…ATPT) and 70–87 (PQTT…QQKQ). The segment covering 148–163 (ANDRPISKRKRLEERH) has biased composition (basic and acidic residues). Over residues 193–205 (PRSPSPPLPPRSP) the composition is skewed to pro residues. Over residues 233-247 (RRQEERERALEEDAM) the composition is skewed to basic and acidic residues. The 313-residue stretch at 278 to 590 (SKIKGLRSFN…KYTPLGFTSA (313 aa)) folds into the mRNA cap 0 methyltransferase domain. 287–288 (NN) serves as a coordination point for mRNA. Residues Lys-291, Gly-314, Asp-338, Asp-379, 422–424 (MFA), and Tyr-427 contribute to the S-adenosyl-L-methionine site.

The protein belongs to the class I-like SAM-binding methyltransferase superfamily. mRNA cap 0 methyltransferase family.

It is found in the nucleus. The enzyme catalyses a 5'-end (5'-triphosphoguanosine)-ribonucleoside in mRNA + S-adenosyl-L-methionine = a 5'-end (N(7)-methyl 5'-triphosphoguanosine)-ribonucleoside in mRNA + S-adenosyl-L-homocysteine. Its function is as follows. Responsible for methylating the 5'-cap structure of mRNAs. This is mRNA cap guanine-N(7) methyltransferase (abd1) from Aspergillus niger (strain ATCC MYA-4892 / CBS 513.88 / FGSC A1513).